The chain runs to 183 residues: Dual specificity protein phosphatase 22-B (183 aa).

A Tyrosine-protein phosphatase domain is found at 4–144 (GINKVLPDLY…LQEFQTGELQ (141 aa)). The active-site Phosphocysteine intermediate is Cys88.

This sequence belongs to the protein-tyrosine phosphatase family. Non-receptor class dual specificity subfamily.

Its subcellular location is the cytoplasm. It localises to the nucleus. The catalysed reaction is O-phospho-L-tyrosyl-[protein] + H2O = L-tyrosyl-[protein] + phosphate. The enzyme catalyses O-phospho-L-seryl-[protein] + H2O = L-seryl-[protein] + phosphate. It carries out the reaction O-phospho-L-threonyl-[protein] + H2O = L-threonyl-[protein] + phosphate. Its function is as follows. Activates the Jnk signaling pathway. Dephosphorylates and deactivates p38 and stress-activated protein kinase/c-Jun N-terminal kinase (SAPK/JNK). This Danio rerio (Zebrafish) protein is Dual specificity protein phosphatase 22-B (dusp22b).